A 312-amino-acid polypeptide reads, in one-letter code: MSRRVATITLNPAYDLVGFCPEIERGEVNLVKTTGLHAAGKGINVAKVLKDLGIDVTVGGFLGKDNQDGFQQLFSELGIANRFQVVQGRTRINVKLTEKDGEVTDFNFSGFEVTPADWERFVTDSLSWLGQFDMVCVSGSLPSGVSPEAFTDWMTRLRSQCPCIIFDSSREALVAGLKAAPWLVKPNRRELEIWAGRKLPEMKDVIEAAHALREQGIAHVVISLGAEGALWVNASGEWIAKPPSVDVVSTVGAGDSMVGGLIYGLLMRESSEHTLRLATAVAALAVSQSNVGITDRPQLAAMMARVDLQPFN.

ATP contacts are provided by residues S223 to G228 and G254 to D255. D255 (proton acceptor) is an active-site residue.

It belongs to the carbohydrate kinase PfkB family.

The enzyme catalyses beta-D-fructose 1-phosphate + ATP = beta-D-fructose 1,6-bisphosphate + ADP + H(+). In terms of biological role, catalyzes the ATP-dependent phosphorylation of fructose-l-phosphate to fructose-l,6-bisphosphate. The polypeptide is 1-phosphofructokinase (fruK) (Escherichia coli O157:H7).